The sequence spans 420 residues: Gamma-glutamyl phosphate reductase (420 aa).

The protein belongs to the gamma-glutamyl phosphate reductase family.

Its subcellular location is the cytoplasm. It catalyses the reaction L-glutamate 5-semialdehyde + phosphate + NADP(+) = L-glutamyl 5-phosphate + NADPH + H(+). It functions in the pathway amino-acid biosynthesis; L-proline biosynthesis; L-glutamate 5-semialdehyde from L-glutamate: step 2/2. Catalyzes the NADPH-dependent reduction of L-glutamate 5-phosphate into L-glutamate 5-semialdehyde and phosphate. The product spontaneously undergoes cyclization to form 1-pyrroline-5-carboxylate. This Pasteurella multocida (strain Pm70) protein is Gamma-glutamyl phosphate reductase.